The primary structure comprises 410 residues: BTB and MATH domain-containing protein 42 (410 aa).

A compositionally biased stretch (polar residues) spans 1-19; the sequence is MSSRSSWSSTEQINRTISS. Residues 1-29 form a disordered region; that stretch reads MSSRSSWSSTEQINRTISSRADDLPPQPR. In terms of domain architecture, MATH spans 45–173; sequence STKLEWKIEQ…DGTLFLICEV (129 aa). Residues 219-287 form the BTB domain; sequence TDCVIHVGNK…MYTGATESLE (69 aa). The segment at 389 to 410 is disordered; sequence TSNIPISVSPPPARKRLRRSAK. Residues 401 to 410 are compositionally biased toward basic residues; that stretch reads ARKRLRRSAK.

As to quaternary structure, interacts with cul-3.

It participates in protein modification; protein ubiquitination. In terms of biological role, probable substrate-specific adapter of an E3 ubiquitin-protein ligase complex which mediates the ubiquitination and subsequent proteasomal degradation of target proteins. The polypeptide is BTB and MATH domain-containing protein 42 (bath-42) (Caenorhabditis elegans).